Reading from the N-terminus, the 210-residue chain is N-(5'-phosphoribosyl)anthranilate isomerase (210 aa).

This sequence belongs to the TrpF family.

It carries out the reaction N-(5-phospho-beta-D-ribosyl)anthranilate = 1-(2-carboxyphenylamino)-1-deoxy-D-ribulose 5-phosphate. Its pathway is amino-acid biosynthesis; L-tryptophan biosynthesis; L-tryptophan from chorismate: step 3/5. This is N-(5'-phosphoribosyl)anthranilate isomerase from Methanococcus aeolicus (strain ATCC BAA-1280 / DSM 17508 / OCM 812 / Nankai-3).